Consider the following 70-residue polypeptide: Large ribosomal subunit protein bL32 (70 aa).

The segment covering 1–19 (MAVPKRKTTPSRRGMRRSH) has biased composition (basic residues). A disordered region spans residues 1–21 (MAVPKRKTTPSRRGMRRSHQA).

The protein belongs to the bacterial ribosomal protein bL32 family.

This chain is Large ribosomal subunit protein bL32, found in Gluconobacter oxydans (strain 621H) (Gluconobacter suboxydans).